Here is a 326-residue protein sequence, read N- to C-terminus: Zinc finger CCCH domain-containing protein 15 (326 aa).

Positions 1–14 (MADGGGGGEAGSGG) are enriched in gly residues. The interval 1-142 (MADGGGGGEA…SSSGSGSGEV (142 aa)) is disordered. A compositionally biased stretch (basic residues) spans 24–33 (KPPKNIRKRP). A compositionally biased stretch (low complexity) spans 47-64 (SGAIAAARAKKAPSSTSK). The segment covering 81-100 (YESSRTIQASTDSRATATLE) has biased composition (polar residues). Over residues 104–125 (EFDRDARAIRERQLKQAEESLK) the composition is skewed to basic and acidic residues. The C3H1-type zinc-finger motif lies at 187–215 (DYQPDICKDYKETGYCGYGDSCKFMHDRG). The RING-type zinc finger occupies 265–303 (CYICREPFVDPVVTKCKHYFCEHCALKHHSKNKKCFVCN).

This is Zinc finger CCCH domain-containing protein 15 from Oryza sativa subsp. japonica (Rice).